A 314-amino-acid polypeptide reads, in one-letter code: Synaptophysin (314 aa).

Topologically, residues 1-25 (MLLLADMDVVNQLVAGGQFRVVKEP) are cytoplasmic. The MARVEL domain occupies 21–228 (VVKEPLGFVK…NLWFVFKETG (208 aa)). Residues 26–49 (LGFVKVLQWVFAIFAFATCGSYTG) traverse the membrane as a helical segment. Over 50 to 107 (ELRLSVECANKTESALNIEVEFEYPFRLHQVYFDAPSCVKGGTTKIFLVGDYSSSAEF) the chain is Vesicular. The N-linked (GlcNAc...) asparagine glycan is linked to N59. Phosphotyrosine is present on Y81. A helical transmembrane segment spans residues 108–131 (FVTVAVFAFLYSMGALATYIFLQN). Over 132-138 (KYRENNK) the chain is Cytoplasmic. The chain crosses the membrane as a helical span at residues 139–162 (GPMMDFLATAVFAFMWLVSSSAWA). At 163–200 (KGLSDVKMATDPENIIKEMPMCRQTGNTCKELRDPVTS) the chain is on the vesicular side. The helical transmembrane segment at 201–224 (GLNTSVVFGFLNLVLWVGNLWFVF) threads the bilayer. Topologically, residues 225-314 (KETGWAAPFM…GAPTSFSNQM (90 aa)) are cytoplasmic. T227 carries the phosphothreonine modification. Residues 239 to 314 (GAPEKQPAPG…GAPTSFSNQM (76 aa)) form a disordered region. The span at 254–264 (AGYGQGPGGYG) shows a compositional bias: gly residues. A repeats, Gly-rich region spans residues 255-305 (GYGQGPGGYGPQDSYGPQGGYQPDYGQPASGGGGGYGPQGDYGQQGYGQQG). The segment covering 265–282 (PQDSYGPQGGYQPDYGQP) has biased composition (low complexity). Phosphotyrosine occurs at positions 279 and 296. Positions 283 to 303 (ASGGGGGYGPQGDYGQQGYGQ) are enriched in gly residues.

It belongs to the synaptophysin/synaptobrevin family. As to quaternary structure, homohexamer or homotetramer. Interacts with SRCIN1. Interacts with VAMP2; the interaction is inhibited by interaction of VAPM2 with SEPT8. Post-translationally, ubiquitinated; mediated by SIAH1 or SIAH2 and leading to its subsequent proteasomal degradation. Phosphorylated by SRC.

It localises to the cytoplasmic vesicle. Its subcellular location is the secretory vesicle. The protein resides in the synaptic vesicle membrane. The protein localises to the synapse. It is found in the synaptosome. Its function is as follows. Possibly involved in structural functions as organizing other membrane components or in targeting the vesicles to the plasma membrane. Involved in the regulation of short-term and long-term synaptic plasticity. The chain is Synaptophysin (Syp) from Mus musculus (Mouse).